A 294-amino-acid polypeptide reads, in one-letter code: Tryptophan 2,3-dioxygenase (294 aa).

Residues 63–67 (FIIQH), Tyr125, and Arg129 contribute to the substrate site. His252 is a binding site for heme. Thr266 serves as a coordination point for substrate.

It belongs to the tryptophan 2,3-dioxygenase family. In terms of assembly, homotetramer. It depends on heme as a cofactor.

It carries out the reaction L-tryptophan + O2 = N-formyl-L-kynurenine. It functions in the pathway amino-acid degradation; L-tryptophan degradation via kynurenine pathway; L-kynurenine from L-tryptophan: step 1/2. Its function is as follows. Heme-dependent dioxygenase that catalyzes the oxidative cleavage of the L-tryptophan (L-Trp) pyrrole ring and converts L-tryptophan to N-formyl-L-kynurenine. Catalyzes the oxidative cleavage of the indole moiety. This Polaromonas sp. (strain JS666 / ATCC BAA-500) protein is Tryptophan 2,3-dioxygenase.